A 373-amino-acid polypeptide reads, in one-letter code: Carbamoyl phosphate synthase small chain (373 aa).

A CPSase region spans residues methionine 1 to proline 179. Residues serine 47, glycine 230, and glycine 232 each contribute to the L-glutamine site. The Glutamine amidotransferase type-1 domain occupies threonine 182–arginine 373. The active-site Nucleophile is the cysteine 258. L-glutamine is bound by residues phenylalanine 259, glutamine 262, asparagine 300, glycine 302, and phenylalanine 303. Catalysis depends on residues histidine 348 and glutamate 350.

The protein belongs to the CarA family. Composed of two chains; the small (or glutamine) chain promotes the hydrolysis of glutamine to ammonia, which is used by the large (or ammonia) chain to synthesize carbamoyl phosphate. Tetramer of heterodimers (alpha,beta)4.

It catalyses the reaction hydrogencarbonate + L-glutamine + 2 ATP + H2O = carbamoyl phosphate + L-glutamate + 2 ADP + phosphate + 2 H(+). The catalysed reaction is L-glutamine + H2O = L-glutamate + NH4(+). Its pathway is amino-acid biosynthesis; L-arginine biosynthesis; carbamoyl phosphate from bicarbonate: step 1/1. The protein operates within pyrimidine metabolism; UMP biosynthesis via de novo pathway; (S)-dihydroorotate from bicarbonate: step 1/3. Small subunit of the glutamine-dependent carbamoyl phosphate synthetase (CPSase). CPSase catalyzes the formation of carbamoyl phosphate from the ammonia moiety of glutamine, carbonate, and phosphate donated by ATP, constituting the first step of 2 biosynthetic pathways, one leading to arginine and/or urea and the other to pyrimidine nucleotides. The small subunit (glutamine amidotransferase) binds and cleaves glutamine to supply the large subunit with the substrate ammonia. This is Carbamoyl phosphate synthase small chain from Mycolicibacterium paratuberculosis (strain ATCC BAA-968 / K-10) (Mycobacterium paratuberculosis).